The chain runs to 552 residues: Metal transporter Nramp6.1 (552 aa).

Asn-11 carries an N-linked (GlcNAc...) asparagine glycan. A run of 7 helical transmembrane segments spans residues 55-75, 88-108, 133-155, 159-181, 189-209, 238-258, and 275-295; these read FLSY…PGNL, ELLW…SLAA, CLWL…GTAF, ILFN…LLLG, KLEL…FGEM, IALL…ALVL, and YFLI…LAVI. N-linked (GlcNAc...) asparagine glycosylation is present at Asn-306. The next 5 helical transmembrane spans lie at 338–358, 377–397, 402–422, 438–458, and 478–498; these read IYAI…TYAG, LVTR…GGSS, LIII…IPLL, IYII…NIYY, and VFIG…VIYL. Positions 511-552 are disordered; sequence PNKNDPQQQTNMENGLAKSTEGPEMVDRAPYREDLADIPLPE. Over residues 514–523 the composition is skewed to polar residues; sequence NDPQQQTNME. Residues 535-545 are compositionally biased toward basic and acidic residues; it reads MVDRAPYREDL.

This sequence belongs to the NRAMP (TC 2.A.55) family.

The protein resides in the membrane. Its function is as follows. Probable divalent metal transporter. In Populus trichocarpa (Western balsam poplar), this protein is Metal transporter Nramp6.1.